The sequence spans 151 residues: SsrA-binding protein (151 aa).

It belongs to the SmpB family.

Its subcellular location is the cytoplasm. Functionally, required for rescue of stalled ribosomes mediated by trans-translation. Binds to transfer-messenger RNA (tmRNA), required for stable association of tmRNA with ribosomes. tmRNA and SmpB together mimic tRNA shape, replacing the anticodon stem-loop with SmpB. tmRNA is encoded by the ssrA gene; the 2 termini fold to resemble tRNA(Ala) and it encodes a 'tag peptide', a short internal open reading frame. During trans-translation Ala-aminoacylated tmRNA acts like a tRNA, entering the A-site of stalled ribosomes, displacing the stalled mRNA. The ribosome then switches to translate the ORF on the tmRNA; the nascent peptide is terminated with the 'tag peptide' encoded by the tmRNA and targeted for degradation. The ribosome is freed to recommence translation, which seems to be the essential function of trans-translation. In Wolinella succinogenes (strain ATCC 29543 / DSM 1740 / CCUG 13145 / JCM 31913 / LMG 7466 / NCTC 11488 / FDC 602W) (Vibrio succinogenes), this protein is SsrA-binding protein.